A 76-amino-acid polypeptide reads, in one-letter code: uncharacterized protein (76 aa).

Residues Leu-6–Phe-60 form the HTH cro/C1-type domain. Residues Gln-17 to Asn-36 constitute a DNA-binding region (H-T-H motif).

This is an uncharacterized protein from Bacillus subtilis (strain 168).